Reading from the N-terminus, the 131-residue chain is Sulfurtransferase TusD (131 aa).

Residue cysteine 81 is the Cysteine persulfide intermediate of the active site.

This sequence belongs to the DsrE/TusD family. In terms of assembly, heterohexamer, formed by a dimer of trimers. The hexameric TusBCD complex contains 2 copies each of TusB, TusC and TusD. The TusBCD complex interacts with TusE.

The protein localises to the cytoplasm. Functionally, part of a sulfur-relay system required for 2-thiolation of 5-methylaminomethyl-2-thiouridine (mnm(5)s(2)U) at tRNA wobble positions. Accepts sulfur from TusA and transfers it in turn to TusE. This chain is Sulfurtransferase TusD, found in Photorhabdus laumondii subsp. laumondii (strain DSM 15139 / CIP 105565 / TT01) (Photorhabdus luminescens subsp. laumondii).